The sequence spans 120 residues: Large ribosomal subunit protein uL18 (120 aa).

The protein belongs to the universal ribosomal protein uL18 family. In terms of assembly, part of the 50S ribosomal subunit; part of the 5S rRNA/L5/L18/L25 subcomplex. Contacts the 5S and 23S rRNAs.

In terms of biological role, this is one of the proteins that bind and probably mediate the attachment of the 5S RNA into the large ribosomal subunit, where it forms part of the central protuberance. This chain is Large ribosomal subunit protein uL18, found in Geobacillus thermodenitrificans (strain NG80-2).